The following is a 109-amino-acid chain: Mitochondrial pyruvate carrier 1 (109 aa).

A2 is modified (N-acetylalanine). At 2–20 (AGALVRKAADYVRSKDFRD) the chain is on the mitochondrial matrix side. Residues 21 to 41 (YLMSTHFWGPVANWGLPIAAI) traverse the membrane as a helical segment. The Mitochondrial intermembrane portion of the chain corresponds to 42-52 (NDMKKSPEIIS). Residues 53–71 (GRMTFALCCYSLTFMRFAY) form a helical membrane-spanning segment. K72 carries the N6-acetyllysine modification. The Mitochondrial matrix segment spans residues 72 to 109 (KVQPRNWLLFACHATNEVAQLIQGGRLIKHEMTKTASA).

This sequence belongs to the mitochondrial pyruvate carrier (MPC) (TC 2.A.105) family. In terms of assembly, homodimer. Forms heterodimer with MPC2. The heterodimer is the more stable and dominant form.

Its subcellular location is the mitochondrion inner membrane. The catalysed reaction is pyruvate(out) + H(+)(out) = pyruvate(in) + H(+)(in). In terms of biological role, mediates the uptake of pyruvate into mitochondria. The sequence is that of Mitochondrial pyruvate carrier 1 (MPC1) from Homo sapiens (Human).